A 151-amino-acid chain; its full sequence is Globin (151 aa).

The 150-residue stretch at 2-151 folds into the Globin domain; that stretch reads SLSDADKKAL…AAFNETLKKA (150 aa). H100 is a heme b binding site.

This sequence belongs to the globin family.

This chain is Globin, found in Biomphalaria glabrata (Bloodfluke planorb).